Here is a 346-residue protein sequence, read N- to C-terminus: Phosphoribosylformylglycinamidine cyclo-ligase (346 aa).

The protein belongs to the AIR synthase family.

Its subcellular location is the cytoplasm. It carries out the reaction 2-formamido-N(1)-(5-O-phospho-beta-D-ribosyl)acetamidine + ATP = 5-amino-1-(5-phospho-beta-D-ribosyl)imidazole + ADP + phosphate + H(+). It functions in the pathway purine metabolism; IMP biosynthesis via de novo pathway; 5-amino-1-(5-phospho-D-ribosyl)imidazole from N(2)-formyl-N(1)-(5-phospho-D-ribosyl)glycinamide: step 2/2. The polypeptide is Phosphoribosylformylglycinamidine cyclo-ligase (Photorhabdus laumondii subsp. laumondii (strain DSM 15139 / CIP 105565 / TT01) (Photorhabdus luminescens subsp. laumondii)).